The following is a 125-amino-acid chain: Translation initiation factor 5A (125 aa).

Lysine 35 bears the Hypusine mark.

The protein belongs to the eIF-5A family.

The protein localises to the cytoplasm. Its function is as follows. Functions by promoting the formation of the first peptide bond. The chain is Translation initiation factor 5A (eIF5A) from Methanosphaerula palustris (strain ATCC BAA-1556 / DSM 19958 / E1-9c).